A 71-amino-acid polypeptide reads, in one-letter code: Small ribosomal subunit protein eS17 (71 aa).

The protein belongs to the eukaryotic ribosomal protein eS17 family.

This is Small ribosomal subunit protein eS17 from Pyrobaculum aerophilum (strain ATCC 51768 / DSM 7523 / JCM 9630 / CIP 104966 / NBRC 100827 / IM2).